Here is a 346-residue protein sequence, read N- to C-terminus: Protein RecA (346 aa).

Gly65 to Thr72 is an ATP binding site.

This sequence belongs to the RecA family.

It localises to the cytoplasm. In terms of biological role, can catalyze the hydrolysis of ATP in the presence of single-stranded DNA, the ATP-dependent uptake of single-stranded DNA by duplex DNA, and the ATP-dependent hybridization of homologous single-stranded DNAs. It interacts with LexA causing its activation and leading to its autocatalytic cleavage. This is Protein RecA from Enterococcus mundtii.